Here is a 171-residue protein sequence, read N- to C-terminus: 3-hydroxydecanoyl-[acyl-carrier-protein] dehydratase (171 aa).

His71 is an active-site residue.

This sequence belongs to the thioester dehydratase family. FabA subfamily. As to quaternary structure, homodimer.

Its subcellular location is the cytoplasm. The catalysed reaction is a (3R)-hydroxyacyl-[ACP] = a (2E)-enoyl-[ACP] + H2O. It carries out the reaction (3R)-hydroxydecanoyl-[ACP] = (2E)-decenoyl-[ACP] + H2O. The enzyme catalyses (2E)-decenoyl-[ACP] = (3Z)-decenoyl-[ACP]. It participates in lipid metabolism; fatty acid biosynthesis. In terms of biological role, necessary for the introduction of cis unsaturation into fatty acids. Catalyzes the dehydration of (3R)-3-hydroxydecanoyl-ACP to E-(2)-decenoyl-ACP and then its isomerization to Z-(3)-decenoyl-ACP. Can catalyze the dehydratase reaction for beta-hydroxyacyl-ACPs with saturated chain lengths up to 16:0, being most active on intermediate chain length. The sequence is that of 3-hydroxydecanoyl-[acyl-carrier-protein] dehydratase from Sinorhizobium medicae (strain WSM419) (Ensifer medicae).